Consider the following 335-residue polypeptide: Nucleoid-associated protein PC1_1634 (335 aa).

This sequence belongs to the YejK family.

It localises to the cytoplasm. Its subcellular location is the nucleoid. This chain is Nucleoid-associated protein PC1_1634, found in Pectobacterium carotovorum subsp. carotovorum (strain PC1).